Reading from the N-terminus, the 772-residue chain is Metal transporter CNNM4 (772 aa).

Topologically, residues 1–175 (MAPGGGGGRR…SLLFMVEEHG (175 aa)) are extracellular. A glycan (N-linked (GlcNAc...) asparagine) is linked at Asn-120. The helical transmembrane segment at 176 to 196 (RFLPLWLHILLVLVLLVLSGI) threads the bilayer. Positions 176–356 (RFLPLWLHIL…EPYNDLVKEE (181 aa)) constitute a CNNM transmembrane domain. Topologically, residues 197–237 (FSGLNLGLMALDPMELRIVQNCGTEKERRYARKIEPIRRKG) are cytoplasmic. Positions 238 to 258 (NYLLCSLLLGNVLVNTSLTIL) form an intramembrane region, helical. Residues 259–261 (LDN) are Cytoplasmic-facing. Residues 262–282 (LIGSGIMAVASSTIGIVIFGE) form a helical membrane-spanning segment. Over 283–290 (ILPQALCS) the chain is Extracellular. The helical transmembrane segment at 291-313 (RHGLAVGANTIVLTKIFMLLTFP) threads the bilayer. Topologically, residues 314-772 (LSFPISKLLD…LHRASQEGTI (459 aa)) are cytoplasmic. CBS domains lie at 375–436 (MTQL…CTPL) and 443–509 (YNHP…ILDE). The segment at 647 to 676 (PDRSPAHPTPLSRSASLSYPDRNTDMTPSS) is disordered. Residues Ser-658, Ser-662, and Ser-767 each carry the phosphoserine modification.

The protein belongs to the ACDP family. In terms of assembly, interacts with COX11. Present in spinal cord dorsal horn neurons and in developing teeth (at protein level). In the tooth, higher expression is found in the ameloblasts during the transition and maturation phases of amelogenesis; reduced expression in the odontoblasts.

It localises to the cell membrane. In terms of biological role, probable metal transporter. The interaction with the metal ion chaperone COX11 suggests that it may play a role in sensory neuron functions. May play a role in biomineralization and retinal function. The polypeptide is Metal transporter CNNM4 (Cnnm4) (Rattus norvegicus (Rat)).